A 444-amino-acid polypeptide reads, in one-letter code: Xylose isomerase (444 aa).

Active-site residues include His-101 and Asp-104. 7 residues coordinate Mg(2+): Glu-232, Glu-268, His-271, Asp-296, Asp-307, Asp-309, and Asp-339.

It belongs to the xylose isomerase family. In terms of assembly, homotetramer. Mg(2+) is required as a cofactor.

Its subcellular location is the cytoplasm. The enzyme catalyses alpha-D-xylose = alpha-D-xylulofuranose. This chain is Xylose isomerase, found in Thermotoga maritima (strain ATCC 43589 / DSM 3109 / JCM 10099 / NBRC 100826 / MSB8).